The primary structure comprises 545 residues: Acetamidase (545 aa).

Active-site charge relay system residues include K130 and S205. S229 serves as the catalytic Acyl-ester intermediate.

The protein belongs to the amidase family.

It catalyses the reaction a monocarboxylic acid amide + H2O = a monocarboxylate + NH4(+). The enzyme catalyses acetamide + H2O = acetate + NH4(+). In terms of biological role, allows acetamide to be used as a sole carbon or nitrogen source. This chain is Acetamidase (amdS), found in Aspergillus oryzae (strain ATCC 42149 / RIB 40) (Yellow koji mold).